A 383-amino-acid chain; its full sequence is DNA dC-&gt;dU-editing enzyme APOBEC-3G (383 aa).

The interval 1–60 (MKPQFRNTVERMYRDTFFYNFNNRPILSRRNTVWLCYEVKTRGPSMPTWDAKIFRGQVYS) is essential for cytoplasmic localization. 2 CMP/dCMP-type deaminase domains span residues 29–138 (RRNT…LRVL) and 214–327 (GQHE…LRTL). Phosphothreonine; by PKA is present on T32. Zn(2+)-binding residues include H65, C97, and C100. The interval 209–335 (KPWVSGQHET…TLHRDGAKIA (127 aa)) is necessary for homooligomerization. Residues 213 to 215 (SGQ) form an interaction with DNA region. Residue T218 is modified to Phosphothreonine; by PKA and CAMK2. H257 contacts Zn(2+). E259 acts as the Proton donor in catalysis. Zn(2+) contacts are provided by C287 and C290. Residues 312–319 (RIYDDQGR) form an interaction with DNA region.

Belongs to the cytidine and deoxycytidylate deaminase family. Homodimer. Zn(2+) serves as cofactor.

Its subcellular location is the cytoplasm. The protein resides in the nucleus. The protein localises to the P-body. It catalyses the reaction a 2'-deoxycytidine in single-stranded DNA + H2O + H(+) = a 2'-deoxyuridine in single-stranded DNA + NH4(+). DNA deaminase (cytidine deaminase) which acts as an inhibitor of retrovirus replication and retrotransposon mobility. After the penetration of retroviral nucleocapsids into target cells of infection and the initiation of reverse transcription, it can induce the conversion of cytosine to uracil in the minus-sense single-strand viral DNA, leading to G-to-A hypermutations in the subsequent plus-strand viral DNA. The resultant detrimental levels of mutations in the proviral genome, along with a deamination-independent mechanism that works prior to the proviral integration, together exert efficient antiretroviral effects in infected target cells. Selectively targets single-stranded DNA and does not deaminate double-stranded DNA or single- or double-stranded RNA. This chain is DNA dC-&gt;dU-editing enzyme APOBEC-3G (APOBEC3G), found in Papio anubis (Olive baboon).